The primary structure comprises 205 residues: Probable GTP-binding protein EngB (205 aa).

The EngB-type G domain occupies 22–194 (ELPEIAFAGR…WESILDLCEI (173 aa)). GTP contacts are provided by residues 30-37 (GRSNVGKS), 57-61 (GRTQL), 75-78 (DLPG), 142-145 (TKAD), and 173-175 (FSA). Ser37 and Thr59 together coordinate Mg(2+).

The protein belongs to the TRAFAC class TrmE-Era-EngA-EngB-Septin-like GTPase superfamily. EngB GTPase family. Mg(2+) is required as a cofactor.

Necessary for normal cell division and for the maintenance of normal septation. The chain is Probable GTP-binding protein EngB from Desulfatibacillum aliphaticivorans.